The chain runs to 230 residues: MKITKNILKAEFIKRPNRFQAYVKINEKIEMVHVPNTGRCKEILIPGSTVILREENNENRKTRYDLIAGYKGDMLISIDSQIPNKVVYEALMNFKIEILKEYTNIKREKTFGKSRFDFKLEKENGEVYYLEVKGVTLENDGLTMFPDAPTERGTKHILELIDVKNKGMGAGVLFLIQLNGVKKFTPNHKMDKNFGEALKLAKEKGVDILAYDCLVEESSISLNNPVSIEI.

Belongs to the SfsA family.

In Clostridium botulinum (strain Okra / Type B1), this protein is Sugar fermentation stimulation protein homolog.